We begin with the raw amino-acid sequence, 281 residues long: Tumor necrosis factor ligand superfamily member 10 (281 aa).

The Cytoplasmic portion of the chain corresponds to 1-17; the sequence is MAMMEVQGGPSLGQTCV. A helical; Signal-anchor for type II membrane protein transmembrane segment spans residues 18-38; sequence LIVIFTVLLQSLCVAVTYVYF. At 39-281 the chain is on the extracellular side; that stretch reads TNELKQMQDK…ASFFGAFLVG (243 aa). Residues 122–280 form the THD domain; it reads VAAHITGTRG…EASFFGAFLV (159 aa). The interval 124 to 144 is disordered; sequence AHITGTRGRSNTLSSPNSKNE. The segment covering 130–141 has biased composition (polar residues); that stretch reads RGRSNTLSSPNS. Residue Cys-230 participates in Zn(2+) binding.

Belongs to the tumor necrosis factor family. Homotrimer. One TNFSF10 homotrimer interacts with three TNFSF10A mononers. One TNFSF10 homotrimer interacts with three TNFSF10B mononers. Tyrosine phosphorylated by PKDCC/VLK. As to expression, widespread; most predominant in spleen, lung and prostate.

It localises to the cell membrane. It is found in the secreted. In terms of biological role, cytokine that binds to TNFRSF10A/TRAILR1, TNFRSF10B/TRAILR2, TNFRSF10C/TRAILR3, TNFRSF10D/TRAILR4 and possibly also to TNFRSF11B/OPG. Induces apoptosis. Its activity may be modulated by binding to the decoy receptors TNFRSF10C/TRAILR3, TNFRSF10D/TRAILR4 and TNFRSF11B/OPG that cannot induce apoptosis. The polypeptide is Tumor necrosis factor ligand superfamily member 10 (TNFSF10) (Homo sapiens (Human)).